Consider the following 338-residue polypeptide: Heat-inducible transcription repressor HrcA (338 aa).

Belongs to the HrcA family.

In terms of biological role, negative regulator of class I heat shock genes (grpE-dnaK-dnaJ and groELS operons). Prevents heat-shock induction of these operons. In Bacillus anthracis (strain A0248), this protein is Heat-inducible transcription repressor HrcA.